A 175-amino-acid polypeptide reads, in one-letter code: GTP-dependent dephospho-CoA kinase (175 aa).

GTP is bound by residues aspartate 48, valine 49, valine 50, aspartate 66, and glutamate 124.

This sequence belongs to the GTP-dependent DPCK family.

The catalysed reaction is 3'-dephospho-CoA + GTP = GDP + CoA + H(+). Its pathway is cofactor biosynthesis; coenzyme A biosynthesis. Its function is as follows. Catalyzes the GTP-dependent phosphorylation of the 3'-hydroxyl group of dephosphocoenzyme A to form coenzyme A (CoA). This Thermofilum pendens (strain DSM 2475 / Hrk 5) protein is GTP-dependent dephospho-CoA kinase.